A 122-amino-acid chain; its full sequence is Large ribosomal subunit protein uL14 (122 aa).

It belongs to the universal ribosomal protein uL14 family. In terms of assembly, part of the 50S ribosomal subunit. Forms a cluster with proteins L3 and L19. In the 70S ribosome, L14 and L19 interact and together make contacts with the 16S rRNA in bridges B5 and B8.

Functionally, binds to 23S rRNA. Forms part of two intersubunit bridges in the 70S ribosome. The polypeptide is Large ribosomal subunit protein uL14 (Thermosynechococcus vestitus (strain NIES-2133 / IAM M-273 / BP-1)).